A 542-amino-acid chain; its full sequence is CTP synthase (542 aa).

Residues 1-266 are amidoligase domain; sequence MATNYIFVTG…DEFVCNRFHL (266 aa). Serine 14 provides a ligand contact to CTP. Serine 14 is a binding site for UTP. Residues 15–20 and aspartate 72 contribute to the ATP site; that span reads SLGKGI. Mg(2+) is bound by residues aspartate 72 and glutamate 140. CTP is bound by residues 147 to 149, 187 to 192, and lysine 223; these read DIE and KTKPTQ. UTP is bound by residues 187–192 and lysine 223; that span reads KTKPTQ. Position 239–241 (239–241) interacts with ATP; that stretch reads KDV. Positions 291–542 constitute a Glutamine amidotransferase type-1 domain; sequence TIGMVGKYVE…VKAAKENQKK (252 aa). L-glutamine is bound at residue glycine 352. Catalysis depends on cysteine 379, which acts as the Nucleophile; for glutamine hydrolysis. Residues 380-383, glutamate 403, and arginine 470 contribute to the L-glutamine site; that span reads LGMQ. Active-site residues include histidine 515 and glutamate 517.

It belongs to the CTP synthase family. Homotetramer.

It carries out the reaction UTP + L-glutamine + ATP + H2O = CTP + L-glutamate + ADP + phosphate + 2 H(+). It catalyses the reaction L-glutamine + H2O = L-glutamate + NH4(+). The enzyme catalyses UTP + NH4(+) + ATP = CTP + ADP + phosphate + 2 H(+). Its pathway is pyrimidine metabolism; CTP biosynthesis via de novo pathway; CTP from UDP: step 2/2. With respect to regulation, allosterically activated by GTP, when glutamine is the substrate; GTP has no effect on the reaction when ammonia is the substrate. The allosteric effector GTP functions by stabilizing the protein conformation that binds the tetrahedral intermediate(s) formed during glutamine hydrolysis. Inhibited by the product CTP, via allosteric rather than competitive inhibition. Functionally, catalyzes the ATP-dependent amination of UTP to CTP with either L-glutamine or ammonia as the source of nitrogen. Regulates intracellular CTP levels through interactions with the four ribonucleotide triphosphates. The sequence is that of CTP synthase from Actinobacillus succinogenes (strain ATCC 55618 / DSM 22257 / CCUG 43843 / 130Z).